A 335-amino-acid polypeptide reads, in one-letter code: Lipoyl synthase (335 aa).

Cys55, Cys60, Cys66, Cys81, Cys85, Cys88, and Ser292 together coordinate [4Fe-4S] cluster. The region spanning 67–281 is the Radical SAM core domain; that stretch reads WEDREATFLI…SQRAEEIGFQ (215 aa).

This sequence belongs to the radical SAM superfamily. Lipoyl synthase family. It depends on [4Fe-4S] cluster as a cofactor.

The protein localises to the cytoplasm. The catalysed reaction is [[Fe-S] cluster scaffold protein carrying a second [4Fe-4S](2+) cluster] + N(6)-octanoyl-L-lysyl-[protein] + 2 oxidized [2Fe-2S]-[ferredoxin] + 2 S-adenosyl-L-methionine + 4 H(+) = [[Fe-S] cluster scaffold protein] + N(6)-[(R)-dihydrolipoyl]-L-lysyl-[protein] + 4 Fe(3+) + 2 hydrogen sulfide + 2 5'-deoxyadenosine + 2 L-methionine + 2 reduced [2Fe-2S]-[ferredoxin]. It functions in the pathway protein modification; protein lipoylation via endogenous pathway; protein N(6)-(lipoyl)lysine from octanoyl-[acyl-carrier-protein]: step 2/2. Catalyzes the radical-mediated insertion of two sulfur atoms into the C-6 and C-8 positions of the octanoyl moiety bound to the lipoyl domains of lipoate-dependent enzymes, thereby converting the octanoylated domains into lipoylated derivatives. This is Lipoyl synthase from Micrococcus luteus (strain ATCC 4698 / DSM 20030 / JCM 1464 / CCM 169 / CCUG 5858 / IAM 1056 / NBRC 3333 / NCIMB 9278 / NCTC 2665 / VKM Ac-2230) (Micrococcus lysodeikticus).